The chain runs to 190 residues: Selenoprotein S (190 aa).

Positions 1–13 are enriched in basic and acidic residues; that stretch reads MEAEDGARVRNED. A disordered region spans residues 1–20; the sequence is MEAEDGARVRNEDVPPQNQD. The helical transmembrane segment at 30–50 threads the bilayer; that stretch reads AFMSEYGWYLLFGCVGVYLLI. Positions 58-68 are enriched in low complexity; it reads SSTQTRSSSGS. The interval 58 to 190 is disordered; that stretch reads SSTQTRSSSG…RRGPSAGGUG (133 aa). A compositionally biased stretch (basic and acidic residues) spans 79–120; the sequence is RRQEALEASRRRMQEEQDARAAEFREKQRMLEEEKRRQKIEM. The span at 136-151 shows a compositional bias: polar residues; that stretch reads VAQQNTEEAASSSSLR. Sec189 is a non-standard amino acid (selenocysteine).

This sequence belongs to the selenoprotein S family.

It localises to the endoplasmic reticulum membrane. It is found in the cytoplasm. Involved in the degradation process of misfolded endoplasmic reticulum (ER) luminal proteins. Participates in the transfer of misfolded proteins from the ER to the cytosol, where they are destroyed by the proteasome in a ubiquitin-dependent manner. The protein is Selenoprotein S (vimp) of Danio rerio (Zebrafish).